The sequence spans 137 residues: 14 kDa proline-rich protein DC2.15 (137 aa).

Residues 1–25 form the signal peptide; that stretch reads MGSKNSASVALFFTLNILFFALVSS. A disordered region spans residues 30–53; it reads PDPYKPKPKPTPKPTPTPYPSAGK. The span at 38 to 48 shows a compositional bias: pro residues; sequence KPTPKPTPTPY. A helical transmembrane segment spans residues 88–104; the sequence is LEGLVNLEAAVCLCTAI.

It is found in the membrane. In terms of biological role, may be connected with the initiation of embryogenesis or with the metabolic changes produced by the removal of auxins. The chain is 14 kDa proline-rich protein DC2.15 from Daucus carota (Wild carrot).